The sequence spans 645 residues: Chaperone protein DnaK (645 aa).

Thr-200 carries the post-translational modification Phosphothreonine; by autocatalysis. Positions Ala-603–Lys-645 are disordered. The segment covering Asp-609–Gly-623 has biased composition (low complexity). The segment covering Pro-625–Lys-645 has biased composition (basic and acidic residues).

This sequence belongs to the heat shock protein 70 family.

In terms of biological role, acts as a chaperone. The polypeptide is Chaperone protein DnaK (Anaplasma marginale (strain St. Maries)).